A 714-amino-acid polypeptide reads, in one-letter code: Fatty acid oxidation complex subunit alpha (714 aa).

Residues 1 to 190 (MEMASAFTLN…KLGLVDDVVP (190 aa)) are enoyl-CoA hydratase. The 3-hydroxyacyl-CoA dehydrogenase stretch occupies residues 306-714 (APLNSVGILG…FWKTTATDLQ (409 aa)).

This sequence in the N-terminal section; belongs to the enoyl-CoA hydratase/isomerase family. The protein in the central section; belongs to the 3-hydroxyacyl-CoA dehydrogenase family. Heterotetramer of two alpha chains (FadJ) and two beta chains (FadI).

It is found in the cytoplasm. It catalyses the reaction a (3S)-3-hydroxyacyl-CoA = a (2E)-enoyl-CoA + H2O. The enzyme catalyses a 4-saturated-(3S)-3-hydroxyacyl-CoA = a (3E)-enoyl-CoA + H2O. The catalysed reaction is a (3S)-3-hydroxyacyl-CoA + NAD(+) = a 3-oxoacyl-CoA + NADH + H(+). It carries out the reaction (3S)-3-hydroxybutanoyl-CoA = (3R)-3-hydroxybutanoyl-CoA. It functions in the pathway lipid metabolism; fatty acid beta-oxidation. Its function is as follows. Catalyzes the formation of a hydroxyacyl-CoA by addition of water on enoyl-CoA. Also exhibits 3-hydroxyacyl-CoA epimerase and 3-hydroxyacyl-CoA dehydrogenase activities. The sequence is that of Fatty acid oxidation complex subunit alpha from Escherichia coli (strain UTI89 / UPEC).